The chain runs to 623 residues: tRNA uridine 5-carboxymethylaminomethyl modification enzyme MnmG (623 aa).

An FAD-binding site is contributed by glycine 12–glycine 17. Glycine 272 to phenylalanine 286 contributes to the NAD(+) binding site.

This sequence belongs to the MnmG family. As to quaternary structure, homodimer. Heterotetramer of two MnmE and two MnmG subunits. FAD is required as a cofactor.

The protein localises to the cytoplasm. Functionally, NAD-binding protein involved in the addition of a carboxymethylaminomethyl (cmnm) group at the wobble position (U34) of certain tRNAs, forming tRNA-cmnm(5)s(2)U34. This is tRNA uridine 5-carboxymethylaminomethyl modification enzyme MnmG from Flavobacterium psychrophilum (strain ATCC 49511 / DSM 21280 / CIP 103535 / JIP02/86).